The following is a 262-amino-acid chain: Thrombin-like enzyme gyroxin B1.3 (262 aa).

An N-terminal signal peptide occupies residues 1–18 (MVLIRVLANLLILQLSYA). Residues 19–262 (QKSSELVIGG…AGSETVNCPS (244 aa)) constitute a propeptide that is removed on maturation. Positions 25–253 (VIGGDECNIN…HLDWIQNIIA (229 aa)) constitute a Peptidase S1 domain. 6 cysteine pairs are disulfide-bonded: Cys31–Cys165, Cys52–Cys68, Cys102–Cys260, Cys144–Cys214, Cys176–Cys193, and Cys204–Cys229. His67 functions as the Charge relay system in the catalytic mechanism. Residue Asn105 is glycosylated (N-linked (GlcNAc...) asparagine). Residue Asp112 is the Charge relay system of the active site. The active-site Charge relay system is the Ser208.

Belongs to the peptidase S1 family. Snake venom subfamily. In terms of assembly, monomer. As to expression, expressed by the venom gland.

It localises to the secreted. Functionally, thrombin-like snake venom serine protease. Displays a specificity similar to trypsin. Releases only fibrinopeptide A in the conversion of fibrinogen to fibrin. Reversibly increases the permeability of the blood brain barrier (BBB) in mice. Induces the barrel rotation syndrome in mice, which is manifested by gyroxin-like, rapid rolling motions. This syndrome may be due to its effect on BBB permeability, and certainly also to other actions affecting endogenous substrates present in the endothelium, nervous tissues or blood. Also shows a moderate inhibitory activity on the human voltage-gated potassium channel Kv10.1/KCNH1/EAG1 (58% current inhibition at 5 uM). It blocks Kv10.1/KCNH1/EAG1 in a time and dose-dependent manner and with a mechanism independent of its enzymatic activity. It may have a preference in interacting with Kv10.1/KCNH1/EAG1 in its closed state, since the inhibitory effect of the toxin is decreased at more depolarized potentials. The polypeptide is Thrombin-like enzyme gyroxin B1.3 (Crotalus durissus terrificus (South American rattlesnake)).